Here is a 381-residue protein sequence, read N- to C-terminus: Alkanesulfonate monooxygenase (381 aa).

The protein belongs to the SsuD family. Homotetramer.

The catalysed reaction is an alkanesulfonate + FMNH2 + O2 = an aldehyde + FMN + sulfite + H2O + 2 H(+). Catalyzes the desulfonation of aliphatic sulfonates. The protein is Alkanesulfonate monooxygenase of Escherichia fergusonii (strain ATCC 35469 / DSM 13698 / CCUG 18766 / IAM 14443 / JCM 21226 / LMG 7866 / NBRC 102419 / NCTC 12128 / CDC 0568-73).